Consider the following 438-residue polypeptide: Methylenetetrahydrofolate--tRNA-(uracil-5-)-methyltransferase TrmFO (438 aa).

Residue 9–14 (GAGLAG) participates in FAD binding.

This sequence belongs to the MnmG family. TrmFO subfamily. Requires FAD as cofactor.

The protein localises to the cytoplasm. The catalysed reaction is uridine(54) in tRNA + (6R)-5,10-methylene-5,6,7,8-tetrahydrofolate + NADH + H(+) = 5-methyluridine(54) in tRNA + (6S)-5,6,7,8-tetrahydrofolate + NAD(+). The enzyme catalyses uridine(54) in tRNA + (6R)-5,10-methylene-5,6,7,8-tetrahydrofolate + NADPH + H(+) = 5-methyluridine(54) in tRNA + (6S)-5,6,7,8-tetrahydrofolate + NADP(+). In terms of biological role, catalyzes the folate-dependent formation of 5-methyl-uridine at position 54 (M-5-U54) in all tRNAs. The polypeptide is Methylenetetrahydrofolate--tRNA-(uracil-5-)-methyltransferase TrmFO (Lactobacillus acidophilus (strain ATCC 700396 / NCK56 / N2 / NCFM)).